The sequence spans 377 residues: Probable glucokinase 2 (377 aa).

27–32 is an ATP binding site; the sequence is CDVGGS.

Belongs to the bacterial glucokinase family.

It catalyses the reaction D-glucose + ATP = D-glucose 6-phosphate + ADP + H(+). This Trichomonas vaginalis protein is Probable glucokinase 2 (GK2).